We begin with the raw amino-acid sequence, 103 residues long: Sec-independent protein translocase protein TatA (103 aa).

The chain crosses the membrane as a helical span at residues 1–21; sequence MGNIFSPTHLIVILLIVLVLF. The interval 60-103 is disordered; it reads YSKTTDVRPQQSQPLSVKRAAERRKGSSSFKEGKASVAKKQRGK.

Belongs to the TatA/E family. In terms of assembly, the Tat system comprises two distinct complexes: a TatABC complex, containing multiple copies of TatA, TatB and TatC subunits, and a separate TatA complex, containing only TatA subunits. Substrates initially bind to the TatABC complex, which probably triggers association of the separate TatA complex to form the active translocon.

Its subcellular location is the cell inner membrane. Functionally, part of the twin-arginine translocation (Tat) system that transports large folded proteins containing a characteristic twin-arginine motif in their signal peptide across membranes. TatA could form the protein-conducting channel of the Tat system. The protein is Sec-independent protein translocase protein TatA of Bartonella quintana (strain Toulouse) (Rochalimaea quintana).